Reading from the N-terminus, the 212-residue chain is Ribonuclease HII (212 aa).

The RNase H type-2 domain maps to Gln24–Glu212. A divalent metal cation contacts are provided by Asp30, Glu31, and Asp122.

It belongs to the RNase HII family. Requires Mn(2+) as cofactor. Mg(2+) is required as a cofactor.

It localises to the cytoplasm. The enzyme catalyses Endonucleolytic cleavage to 5'-phosphomonoester.. Endonuclease that specifically degrades the RNA of RNA-DNA hybrids. This chain is Ribonuclease HII, found in Vibrio campbellii (strain ATCC BAA-1116).